The sequence spans 425 residues: MDRATFACSTAFFHDYSSSAQGTFSTGHVDFIDKIESFTYSDFFRDYLIPNQPCVFSEKFTDGWGSRRNWVTWGGKPDFDHLLQEFGEAIVPVANCDVKEYNSNPKEQLPFKEYISYWKEYIKNGYRSSRGCLYLKDWHLSRAFPEQDVYTTPVYFSSDWLNEYWDAIAVDDYRFVYMGPKGSWTPFHADVFRSYSWSANICGRKKWLLYPPGQEDYLKDCHGNLPFDVTAPGLQDRSVYPRYNQSQPPVEIVQEAGEIVFIPSGWHHQVYNLEDTISINHNWVNGCNVAIMWCFLQDELAAVQREINEWKDPMDDWHLQCQLIMKSCTGIDYKEFYNFLKVIAENRISILENGLDDEASAKNTPKAAISTLGMLHAVFDLKRTVKVLTSLSANEDFKKLDLTSLSPPQEALLHHLKAAIDTALL.

One can recognise a JmjC domain in the interval 141–300; that stretch reads SRAFPEQDVY…IMWCFLQDEL (160 aa). Fe cation is bound by residues histidine 188, aspartate 190, and histidine 268.

This sequence belongs to the JMJD6 family. Fe(2+) is required as a cofactor.

It localises to the cytoplasm. It carries out the reaction L-lysyl-[protein] + 2-oxoglutarate + O2 = 4-hydroxy-L-lysyl-[protein] + succinate + CO2. In terms of biological role, catalyzes the 2-oxoglutarate and iron-dependent C4-lysyl hydroxylation of ETF1 at 'Lys-63' thereby promoting the translational termination efficiency of ETF1. The sequence is that of 2-oxoglutarate and iron-dependent oxygenase JMJD4 (JMJD4) from Gallus gallus (Chicken).